Here is a 318-residue protein sequence, read N- to C-terminus: L-lactate dehydrogenase (318 aa).

NAD(+) is bound by residues Val14, Asp35, Lys40, and Tyr66. Substrate contacts are provided by residues Arg89 and 121 to 124; that span reads NPVD. NAD(+) is bound at residue Ser144. 149–152 serves as a coordination point for substrate; it reads DTAR. His176 (proton acceptor) is an active-site residue. Tyr220 is modified (phosphotyrosine). Thr229 provides a ligand contact to substrate.

This sequence belongs to the LDH/MDH superfamily. LDH family. As to quaternary structure, homotetramer.

It localises to the cytoplasm. The enzyme catalyses (S)-lactate + NAD(+) = pyruvate + NADH + H(+). Its pathway is fermentation; pyruvate fermentation to lactate; (S)-lactate from pyruvate: step 1/1. Its function is as follows. Catalyzes the conversion of lactate to pyruvate. The protein is L-lactate dehydrogenase of Staphylococcus haemolyticus (strain JCSC1435).